A 172-amino-acid chain; its full sequence is MRHKKAGRQFGRDTSSRRAMLRNLTANLITHERIETTDAKAKELRRVAERLITKATRLGKVAYTAHGELSPGDRARRLHAERLVGSYIPRWGVATDGKKVDIIAKVMIDLSKRFEGRPGGYTRIIKLGPRRGDCAQMSLIEFIDAPPVADAPAQAAEPVAAAEPATPATTAG.

The interval 153 to 172 (AQAAEPVAAAEPATPATTAG) is disordered.

This sequence belongs to the bacterial ribosomal protein bL17 family. As to quaternary structure, part of the 50S ribosomal subunit. Contacts protein L32.

This Sorangium cellulosum (strain So ce56) (Polyangium cellulosum (strain So ce56)) protein is Large ribosomal subunit protein bL17.